The following is a 548-amino-acid chain: Chaperonin GroEL (548 aa).

Residues 29–32 (TMGP), Lys50, 86–90 (DGTTT), Gly414, 478–480 (NAA), and Asp494 each bind ATP.

The protein belongs to the chaperonin (HSP60) family. In terms of assembly, forms a cylinder of 14 subunits composed of two heptameric rings stacked back-to-back. Interacts with the co-chaperonin GroES.

The protein resides in the cytoplasm. It carries out the reaction ATP + H2O + a folded polypeptide = ADP + phosphate + an unfolded polypeptide.. Together with its co-chaperonin GroES, plays an essential role in assisting protein folding. The GroEL-GroES system forms a nano-cage that allows encapsulation of the non-native substrate proteins and provides a physical environment optimized to promote and accelerate protein folding. This chain is Chaperonin GroEL, found in Legionella pneumophila (strain Corby).